We begin with the raw amino-acid sequence, 91 residues long: Probable Fe(2+)-trafficking protein (91 aa).

The protein belongs to the Fe(2+)-trafficking protein family.

Functionally, could be a mediator in iron transactions between iron acquisition and iron-requiring processes, such as synthesis and/or repair of Fe-S clusters in biosynthetic enzymes. This Paraburkholderia phymatum (strain DSM 17167 / CIP 108236 / LMG 21445 / STM815) (Burkholderia phymatum) protein is Probable Fe(2+)-trafficking protein.